The sequence spans 234 residues: Meiotically up-regulated gene 35 protein (234 aa).

A compositionally biased stretch (basic and acidic residues) spans 126–156; sequence DSSGDLTSTDKERDVSPVSHSEKPYWDRYDL. Residues 126-176 are disordered; it reads DSSGDLTSTDKERDVSPVSHSEKPYWDRYDLDQPSNQDVEESRNLVQEPKH. 2 positions are modified to phosphoserine: S127 and S128. The residue at position 132 (T132) is a Phosphothreonine. Residue S141 is modified to Phosphoserine.

It localises to the cytoplasm. Has a role in meiosis. The sequence is that of Meiotically up-regulated gene 35 protein (mug35) from Schizosaccharomyces pombe (strain 972 / ATCC 24843) (Fission yeast).